Here is a 252-residue protein sequence, read N- to C-terminus: Phosphoribosylformylglycinamidine synthase subunit PurQ (252 aa).

In terms of domain architecture, Glutamine amidotransferase type-1 spans Val-6–Ser-237. The Nucleophile role is filled by Cys-89. Active-site residues include His-206 and Glu-208.

In terms of assembly, part of the FGAM synthase complex composed of 1 PurL, 1 PurQ and 2 PurS subunits.

It is found in the cytoplasm. The enzyme catalyses N(2)-formyl-N(1)-(5-phospho-beta-D-ribosyl)glycinamide + L-glutamine + ATP + H2O = 2-formamido-N(1)-(5-O-phospho-beta-D-ribosyl)acetamidine + L-glutamate + ADP + phosphate + H(+). The catalysed reaction is L-glutamine + H2O = L-glutamate + NH4(+). It participates in purine metabolism; IMP biosynthesis via de novo pathway; 5-amino-1-(5-phospho-D-ribosyl)imidazole from N(2)-formyl-N(1)-(5-phospho-D-ribosyl)glycinamide: step 1/2. Functionally, part of the phosphoribosylformylglycinamidine synthase complex involved in the purines biosynthetic pathway. Catalyzes the ATP-dependent conversion of formylglycinamide ribonucleotide (FGAR) and glutamine to yield formylglycinamidine ribonucleotide (FGAM) and glutamate. The FGAM synthase complex is composed of three subunits. PurQ produces an ammonia molecule by converting glutamine to glutamate. PurL transfers the ammonia molecule to FGAR to form FGAM in an ATP-dependent manner. PurS interacts with PurQ and PurL and is thought to assist in the transfer of the ammonia molecule from PurQ to PurL. This Chlorobaculum parvum (strain DSM 263 / NCIMB 8327) (Chlorobium vibrioforme subsp. thiosulfatophilum) protein is Phosphoribosylformylglycinamidine synthase subunit PurQ.